The chain runs to 103 residues: Histone H4.2 (103 aa).

The span at 1 to 14 (MTGRGKGGKGLGKG) shows a compositional bias: gly residues. A disordered region spans residues 1-20 (MTGRGKGGKGLGKGGAKRHR). An N6-acetyl-N6-methyllysine; alternate modification is found at Lys-6. 3 positions are modified to N6-methyllysine; alternate: Lys-6, Lys-9, and Lys-13. Residue Lys-13 is modified to N6-acetyl-N6-methyllysine; alternate. Residues 17 to 21 (KRHRK) mediate DNA binding. The residue at position 92 (Lys-92) is an N6-glutaryllysine.

The protein belongs to the histone H4 family. In terms of assembly, the nucleosome is a histone octamer containing two molecules each of H2A, H2B, H3 and H4 assembled in one H3-H4 heterotetramer and two H2A-H2B heterodimers. The octamer wraps approximately 147 bp of DNA. In terms of processing, glutarylation at Lys-92 (H4K91glu) destabilizes nucleosomes by promoting dissociation of the H2A-H2B dimers from nucleosomes.

It is found in the nucleus. The protein localises to the chromosome. Its function is as follows. Core component of nucleosome. Nucleosomes wrap and compact DNA into chromatin, limiting DNA accessibility to the cellular machineries which require DNA as a template. Histones thereby play a central role in transcription regulation, DNA repair, DNA replication and chromosomal stability. DNA accessibility is regulated via a complex set of post-translational modifications of histones, also called histone code, and nucleosome remodeling. In Talaromyces funiculosus (Fruitlet core rot fungus), this protein is Histone H4.2 (H4.2).